The following is a 187-amino-acid chain: Small ribosomal subunit protein uS5 (187 aa).

The 64-residue stretch at 20–83 (FADRLVAINR…EQAKRQMIRV (64 aa)) folds into the S5 DRBM domain. The interval 155–187 (KKEQSPRSVAQRRGKKVADILPKRDEAPAEAEA) is disordered. A compositionally biased stretch (basic and acidic residues) spans 170–181 (KVADILPKRDEA).

It belongs to the universal ribosomal protein uS5 family. Part of the 30S ribosomal subunit. Contacts proteins S4 and S8.

With S4 and S12 plays an important role in translational accuracy. In terms of biological role, located at the back of the 30S subunit body where it stabilizes the conformation of the head with respect to the body. The sequence is that of Small ribosomal subunit protein uS5 from Ruegeria sp. (strain TM1040) (Silicibacter sp.).